The following is a 509-amino-acid chain: Maturase K (509 aa).

Belongs to the intron maturase 2 family. MatK subfamily.

Its subcellular location is the plastid. The protein resides in the chloroplast. In terms of biological role, usually encoded in the trnK tRNA gene intron. Probably assists in splicing its own and other chloroplast group II introns. In Drimys granadensis, this protein is Maturase K.